The primary structure comprises 335 residues: Phospho-N-acetylmuramoyl-pentapeptide-transferase (335 aa).

10 helical membrane passes run 3-23 (LTIL…PHFI), 53-73 (GGTV…LVYF), 78-98 (SLGL…IGFL), 118-138 (FTFQ…PSGI), 143-163 (VFGY…FWVV), 174-194 (GIDG…GVIA), 200-220 (FDVL…FLFN), 226-246 (IFMG…ISIA), 251-271 (WTLL…MLQV), and 314-334 (VDAF…AILY).

It belongs to the glycosyltransferase 4 family. MraY subfamily. The cofactor is Mg(2+).

It is found in the cell membrane. The catalysed reaction is UDP-N-acetyl-alpha-D-muramoyl-L-alanyl-gamma-D-glutamyl-L-lysyl-D-alanyl-D-alanine + di-trans,octa-cis-undecaprenyl phosphate = Mur2Ac(oyl-L-Ala-gamma-D-Glu-L-Lys-D-Ala-D-Ala)-di-trans,octa-cis-undecaprenyl diphosphate + UMP. It participates in cell wall biogenesis; peptidoglycan biosynthesis. Catalyzes the initial step of the lipid cycle reactions in the biosynthesis of the cell wall peptidoglycan: transfers peptidoglycan precursor phospho-MurNAc-pentapeptide from UDP-MurNAc-pentapeptide onto the lipid carrier undecaprenyl phosphate, yielding undecaprenyl-pyrophosphoryl-MurNAc-pentapeptide, known as lipid I. In Streptococcus equi subsp. equi (strain 4047), this protein is Phospho-N-acetylmuramoyl-pentapeptide-transferase.